A 428-amino-acid polypeptide reads, in one-letter code: Cytochrome c biogenesis protein CcsB (428 aa).

3 helical membrane passes run 14–34 (LRFA…GTFI), 72–92 (SIWF…CSFR), and 162–182 (IGPL…AYGS).

Belongs to the Ccs1/CcsB family. In terms of assembly, may interact with CcsA.

It localises to the cellular thylakoid membrane. Required during biogenesis of c-type cytochromes (cytochrome c6 and cytochrome f) at the step of heme attachment. The chain is Cytochrome c biogenesis protein CcsB from Prochlorococcus marinus (strain MIT 9312).